We begin with the raw amino-acid sequence, 608 residues long: 1-deoxy-D-xylulose-5-phosphate synthase (608 aa).

Thiamine diphosphate contacts are provided by residues H80 and G121–S123. A Mg(2+)-binding site is contributed by D152. Thiamine diphosphate-binding positions include G153 to A154, N181, Y282, and E357. N181 contacts Mg(2+).

This sequence belongs to the transketolase family. DXPS subfamily. In terms of assembly, homodimer. Requires Mg(2+) as cofactor. Thiamine diphosphate is required as a cofactor.

It catalyses the reaction D-glyceraldehyde 3-phosphate + pyruvate + H(+) = 1-deoxy-D-xylulose 5-phosphate + CO2. Its pathway is metabolic intermediate biosynthesis; 1-deoxy-D-xylulose 5-phosphate biosynthesis; 1-deoxy-D-xylulose 5-phosphate from D-glyceraldehyde 3-phosphate and pyruvate: step 1/1. In terms of biological role, catalyzes the acyloin condensation reaction between C atoms 2 and 3 of pyruvate and glyceraldehyde 3-phosphate to yield 1-deoxy-D-xylulose-5-phosphate (DXP). The polypeptide is 1-deoxy-D-xylulose-5-phosphate synthase (Buchnera aphidicola subsp. Acyrthosiphon pisum (strain 5A)).